Reading from the N-terminus, the 450-residue chain is MDNKLFGTDGLRGRVNAYPMTPDVVMRLALSAGLHFRNGSRRHKVLIGKDTRRSGYIYEYALSSGFCAAGMDVFLTGPLPTPAISFLTRDMRADVGVVISASHNPACDNGIKFFDHMGFKLPDAVEAEIAARVEGYAQDWRLPDPDHVGRAFKLEDSPGRYNVFLKNSIPLDVNFEGLKIVLDCAHGAAYRVTPQVFEELGAKVIKIGVDPDGSNINQRVGSLFPQQVARMVAEAEADIGIALDGDADRVIVADEKGRILDGDQIMAICALDLMERGALPGNLLVATVMSNMALEVFMKDHGGRLLRTPVGDRYVVEAMRAQGAVFGGEQSGHLIFLNHSTTGDGTLAALQLMKIMVRKGKPLSELATLLSPFPQKLVNVPVARKIPFSEAPAIEAAVKDAEATLSGRGRVLLRYSGTESLARVMVEAQDAALVESLCDSLAEVVARALA.

S102 acts as the Phosphoserine intermediate in catalysis. Residues S102, D244, D246, and D248 each contribute to the Mg(2+) site. At S102 the chain carries Phosphoserine.

This sequence belongs to the phosphohexose mutase family. Mg(2+) serves as cofactor. Post-translationally, activated by phosphorylation.

The enzyme catalyses alpha-D-glucosamine 1-phosphate = D-glucosamine 6-phosphate. Its function is as follows. Catalyzes the conversion of glucosamine-6-phosphate to glucosamine-1-phosphate. The protein is Phosphoglucosamine mutase of Solidesulfovibrio magneticus (strain ATCC 700980 / DSM 13731 / RS-1) (Desulfovibrio magneticus).